The chain runs to 801 residues: Phosphatidylinositol 4-kinase beta (801 aa).

Disordered stretches follow at residues 1-29 (MGDT…GGSL), 101-121 (EDEM…RRRQ), and 250-304 (RKRE…EDEP). Position 2 is an N-acetylglycine (Gly2). The interval 2 to 68 (GDTAVEPAPL…VRLLHGAVAV (67 aa)) is interaction with ACBD3. The PIK helical domain maps to 29–242 (LLSVITEGVG…GTKLRKLILS (214 aa)). Ser258 is subject to Phosphoserine. Residues 259–268 (PALNTGLSPS) show a composition bias toward polar residues. Thr263 carries the phosphothreonine modification. Phosphoserine is present on residues Ser266, Ser275, Ser277, Ser284, Ser294, and Ser413. Positions 278–294 (DATASISLSSSLKRTAS) are enriched in low complexity. Position 423 is a phosphothreonine (Thr423). A Phosphoserine modification is found at Ser496. Thr502 and Thr504 each carry phosphothreonine. A PI3K/PI4K catalytic domain is found at 520–786 (EPWQEKVRRI…MVDGSMRSIT (267 aa)). The G-loop stretch occupies residues 526–532 (VRRIREG). Positions 653–661 (QVKDRHNGN) are catalytic loop. An activation loop region spans residues 672–696 (HIDFGFILSSSPRNLGFETSAFKLT).

The protein belongs to the PI3/PI4-kinase family. Type III PI4K subfamily. In terms of assembly, interacts with ARF1 and ARF3 in the Golgi complex, but not with ARF4, ARF5 or ARF6. Interacts with NCS1/FREQ in a calcium-independent manner. Interacts with CALN1/CABP8 and CALN2/CABP7; in a calcium-dependent manner; this interaction competes with NCS1/FREQ binding. Interacts with ACBD3. Interacts with ARMH3, YWHAB, YWHAE, YWHAG, YWHAH, YWHAQ, YWHAZ and SFN. Interacts with GGA2 (via VHS domain); the interaction is important for PI4KB location at the Golgi apparatus membrane. Interacts with ATG9A. Mg(2+) is required as a cofactor. The cofactor is Mn(2+).

It localises to the endomembrane system. The protein resides in the mitochondrion outer membrane. Its subcellular location is the rough endoplasmic reticulum membrane. The protein localises to the golgi apparatus. It is found in the golgi apparatus membrane. The catalysed reaction is a 1,2-diacyl-sn-glycero-3-phospho-(1D-myo-inositol) + ATP = a 1,2-diacyl-sn-glycero-3-phospho-(1D-myo-inositol 4-phosphate) + ADP + H(+). With respect to regulation, inhibited by wortmannin. Increased kinase activity upon interaction with NCS1/FREQ. Functionally, phosphorylates phosphatidylinositol (PI) in the first committed step in the production of the second messenger inositol-1,4,5,-trisphosphate (PIP). May regulate Golgi disintegration/reorganization during mitosis, possibly via its phosphorylation. Involved in Golgi-to-plasma membrane trafficking. May play an important role in the inner ear development. The protein is Phosphatidylinositol 4-kinase beta (PI4KB) of Sorex araneus (Eurasian common shrew).